Here is a 432-residue protein sequence, read N- to C-terminus: Phosphoribosylamine--glycine ligase (432 aa).

Positions 110–316 (RNFMKDNDIE…MIDVMSAVVN (207 aa)) constitute an ATP-grasp domain. An ATP-binding site is contributed by 137–194 (IEELGSVAIKPAGLTGGKGVKVMGDQLPDTGAAYDYAVSLLDGDNVVVEENLVGEEFT). Gln-274, Glu-286, and Asn-288 together coordinate Mg(2+). Residues Gln-274, Glu-286, and Asn-288 each coordinate Mn(2+).

It belongs to the GARS family. It depends on Mg(2+) as a cofactor. Mn(2+) serves as cofactor.

It carries out the reaction 5-phospho-beta-D-ribosylamine + glycine + ATP = N(1)-(5-phospho-beta-D-ribosyl)glycinamide + ADP + phosphate + H(+). It functions in the pathway purine metabolism; IMP biosynthesis via de novo pathway; N(1)-(5-phospho-D-ribosyl)glycinamide from 5-phospho-alpha-D-ribose 1-diphosphate: step 2/2. The sequence is that of Phosphoribosylamine--glycine ligase from Methanococcoides burtonii (strain DSM 6242 / NBRC 107633 / OCM 468 / ACE-M).